The chain runs to 248 residues: Glutathione S-transferase omega-2 (248 aa).

Residues 22–101 enclose the GST N-terminal domain; it reads GVIRIYSMRF…YLDDVFPGRK (80 aa). Catalysis depends on Cys-32, which acts as the Nucleophile. Glutathione is bound by residues Lys-59, Val-72, and 85-86; that span reads ES. One can recognise a GST C-terminal domain in the interval 106–231; sequence DPYERARQKM…IFLGFLNLYF (126 aa).

Belongs to the GST superfamily. Omega family.

The enzyme catalyses RX + glutathione = an S-substituted glutathione + a halide anion + H(+). The catalysed reaction is L-dehydroascorbate + 2 glutathione = glutathione disulfide + L-ascorbate. It catalyses the reaction methylarsonate + 2 glutathione + H(+) = methylarsonous acid + glutathione disulfide + H2O. Functionally, exhibits glutathione-dependent thiol transferase activity. Has high dehydroascorbate reductase activity and may contribute to the recycling of ascorbic acid. Participates in the biotransformation of inorganic arsenic and reduces monomethylarsonic acid (MMA). The sequence is that of Glutathione S-transferase omega-2 (Gsto2) from Rattus norvegicus (Rat).